Here is a 300-residue protein sequence, read N- to C-terminus: Movement protein (300 aa).

It belongs to the alfamovirus movement protein family.

The protein localises to the host cell junction. The protein resides in the host plasmodesma. Functionally, transports viral genome to neighboring plant cells directly through plasmosdesmata, without any budding. The movement protein allows efficient cell to cell propagation, by bypassing the host cell wall barrier. Acts by forming a tubular structure at the host plasmodesmata, enlarging it enough to allow free passage of virion capsids. The sequence is that of Movement protein from Alfalfa mosaic virus (AMV).